Reading from the N-terminus, the 390-residue chain is HIT domain-containing protein DDB_G0272839 (390 aa).

Residues 168–201 (DNENEKEKEKEMELDNDNTNTESIPPITSKSTST) form a disordered region. A compositionally biased stretch (low complexity) spans 184–201 (DNTNTESIPPITSKSTST). In terms of domain architecture, HIT spans 232–343 (YFCNKPESFL…ISNDYNTKYL (112 aa)).

This chain is HIT domain-containing protein DDB_G0272839, found in Dictyostelium discoideum (Social amoeba).